We begin with the raw amino-acid sequence, 286 residues long: Putative electron transfer flavoprotein subunit YgcQ (286 aa).

225–253 (VCIVVGASGAAALMAGVRNSKFVVAINHD) lines the FAD pocket.

It belongs to the ETF alpha-subunit/FixB family. In terms of assembly, ygcQ and YgcR form a heterodimer.

Its function is as follows. May play a role in a redox process. In Escherichia coli (strain K12), this protein is Putative electron transfer flavoprotein subunit YgcQ (ygcQ).